The sequence spans 211 residues: Large ribosomal subunit protein uL3 (211 aa).

Positions 126-147 (HGQSRGPMAHGSRYHRRPGSMG) are disordered.

It belongs to the universal ribosomal protein uL3 family. As to quaternary structure, part of the 50S ribosomal subunit. Forms a cluster with proteins L14 and L19.

One of the primary rRNA binding proteins, it binds directly near the 3'-end of the 23S rRNA, where it nucleates assembly of the 50S subunit. The protein is Large ribosomal subunit protein uL3 of Geobacillus thermodenitrificans (strain NG80-2).